We begin with the raw amino-acid sequence, 692 residues long: DNA ligase (692 aa).

Polar residues predominate over residues 1 to 14 (MQPDLFSTASQADA). Residues 1–27 (MQPDLFSTASQADANATPEEPDASNPA) form a disordered region. Residues 54–58 (DAEYD), 103–104 (SL), and E134 each bind NAD(+). K136 (N6-AMP-lysine intermediate) is an active-site residue. NAD(+) is bound by residues R157, E194, K311, and K335. Zn(2+) is bound by residues C429, C432, C447, and C454. Positions 612–692 (NKPKPFAGKT…ALLQLLDTHE (81 aa)) constitute a BRCT domain.

This sequence belongs to the NAD-dependent DNA ligase family. LigA subfamily. Requires Mg(2+) as cofactor. Mn(2+) is required as a cofactor.

It catalyses the reaction NAD(+) + (deoxyribonucleotide)n-3'-hydroxyl + 5'-phospho-(deoxyribonucleotide)m = (deoxyribonucleotide)n+m + AMP + beta-nicotinamide D-nucleotide.. Functionally, DNA ligase that catalyzes the formation of phosphodiester linkages between 5'-phosphoryl and 3'-hydroxyl groups in double-stranded DNA using NAD as a coenzyme and as the energy source for the reaction. It is essential for DNA replication and repair of damaged DNA. The polypeptide is DNA ligase (Janthinobacterium sp. (strain Marseille) (Minibacterium massiliensis)).